The chain runs to 255 residues: tRNA (guanine-N(1)-)-methyltransferase (255 aa).

Residues glycine 113 and 133–138 (IGDYVL) each bind S-adenosyl-L-methionine.

Belongs to the RNA methyltransferase TrmD family. Homodimer.

It localises to the cytoplasm. It carries out the reaction guanosine(37) in tRNA + S-adenosyl-L-methionine = N(1)-methylguanosine(37) in tRNA + S-adenosyl-L-homocysteine + H(+). Functionally, specifically methylates guanosine-37 in various tRNAs. The polypeptide is tRNA (guanine-N(1)-)-methyltransferase (Shigella flexneri serotype 5b (strain 8401)).